A 99-amino-acid chain; its full sequence is Acylphosphatase-2 (99 aa).

N-acetylserine is present on Ser-2. The Acylphosphatase-like domain occupies 9 to 99 (SVDYEVFGRV…LEYSSFNIRY (91 aa)). Residues Arg-24 and Asn-42 contribute to the active site. Ser-93 is subject to Phosphoserine.

The protein belongs to the acylphosphatase family.

The enzyme catalyses an acyl phosphate + H2O = a carboxylate + phosphate + H(+). Its function is as follows. Its physiological role is not yet clear. This is Acylphosphatase-2 (ACYP2) from Bos taurus (Bovine).